The following is a 565-amino-acid chain: Adenine deaminase (565 aa).

Belongs to the metallo-dependent hydrolases superfamily. Adenine deaminase family. The cofactor is Mn(2+).

It catalyses the reaction adenine + H2O + H(+) = hypoxanthine + NH4(+). This is Adenine deaminase from Lactobacillus delbrueckii subsp. bulgaricus (strain ATCC 11842 / DSM 20081 / BCRC 10696 / JCM 1002 / NBRC 13953 / NCIMB 11778 / NCTC 12712 / WDCM 00102 / Lb 14).